Reading from the N-terminus, the 694-residue chain is Elongation factor G (694 aa).

The tr-type G domain maps to 6–288 (KLYRNIGIAA…GVIEYLPSPT (283 aa)). GTP contacts are provided by residues 15-22 (AHVDAGKT), 86-90 (DTPGH), and 140-143 (NKMD).

The protein belongs to the TRAFAC class translation factor GTPase superfamily. Classic translation factor GTPase family. EF-G/EF-2 subfamily.

Its subcellular location is the cytoplasm. Catalyzes the GTP-dependent ribosomal translocation step during translation elongation. During this step, the ribosome changes from the pre-translocational (PRE) to the post-translocational (POST) state as the newly formed A-site-bound peptidyl-tRNA and P-site-bound deacylated tRNA move to the P and E sites, respectively. Catalyzes the coordinated movement of the two tRNA molecules, the mRNA and conformational changes in the ribosome. The chain is Elongation factor G from Legionella pneumophila (strain Lens).